The sequence spans 213 residues: Ribosomal RNA large subunit methyltransferase E (213 aa).

S-adenosyl-L-methionine contacts are provided by Gly59, Phe61, Asp79, Asp97, and Asp121. The active-site Proton acceptor is the Lys161.

Belongs to the class I-like SAM-binding methyltransferase superfamily. RNA methyltransferase RlmE family.

Its subcellular location is the cytoplasm. It catalyses the reaction uridine(2552) in 23S rRNA + S-adenosyl-L-methionine = 2'-O-methyluridine(2552) in 23S rRNA + S-adenosyl-L-homocysteine + H(+). Specifically methylates the uridine in position 2552 of 23S rRNA at the 2'-O position of the ribose in the fully assembled 50S ribosomal subunit. The protein is Ribosomal RNA large subunit methyltransferase E of Myxococcus xanthus (strain DK1622).